The chain runs to 1090 residues: Telomerase reverse transcriptase (1090 aa).

Positions 184–301 (GFLLRPPSRK…PLEGGPSWRS (118 aa)) are disordered. A compositionally biased stretch (basic residues) spans 190–204 (PSRKHKSFQVGKKTR). Composition is skewed to basic and acidic residues over residues 218-232 (EESRKRRRVESEVST) and 252-262 (HHEERRQHEAV). Pro residues predominate over residues 281-294 (KPPPETSAAPPPLE). The TFLY; involved in RNA binding motif lies at 316 to 321 (TLGFLY). Interaction with RNA template regions lie at residues 371–376 (LPLRYF) and 477–503 (WKIKVMDCDWLKLRRTAGRFPPSELAY). The Reverse transcriptase domain occupies 569–893 (SPAQVASLPK…CLFPWCGLLL (325 aa)). Mg(2+) contacts are provided by Asp666, Asp826, and Asp827.

This sequence belongs to the reverse transcriptase family. Telomerase subfamily. As to quaternary structure, catalytic subunit of the telomerase holoenzyme complex composed minimally of TERT and the telomerase RNA template component (TERC). In terms of tissue distribution, expressed at highest levels in gonads and brain, and at lower levels in heart, spleen, kidney, gill, muscle and skin. Detected in embryonic stem cell lines before and after differentiation. Isoform F is expressed in gonads, with higher levels in testis relative to ovary, but is not detected in other tissues. Isoform B is expressed predominantly in testis. Isoform C is up-regulated in embryonic stem cell lines after differentiation.

It is found in the nucleus. The protein resides in the chromosome. It localises to the telomere. It carries out the reaction DNA(n) + a 2'-deoxyribonucleoside 5'-triphosphate = DNA(n+1) + diphosphate. Its function is as follows. Telomerase is a ribonucleoprotein enzyme essential for the replication of chromosome termini in most eukaryotes. It elongates telomeres. It is a reverse transcriptase that adds simple sequence repeats to chromosome ends by copying a template sequence within the RNA component of the enzyme. The polypeptide is Telomerase reverse transcriptase (Oryzias latipes (Japanese rice fish)).